Here is a 221-residue protein sequence, read N- to C-terminus: Sugar transporter SWEET1 (221 aa).

Helical transmembrane passes span 3-23 (AGGF…LGMF), 42-62 (VQFL…SYGA), 68-88 (ILIV…LAYL), 96-116 (VVLL…GYFW), 129-149 (LGLF…ADLA), 160-180 (LSYP…LYGF), and 186-206 (YIMV…WLFW). Residues 10 to 94 (LIYGACVVFT…LAYLHYCPRK (85 aa)) form the MtN3/slv 1 domain. One can recognise a MtN3/slv 2 domain in the interval 127-212 (QQLGLFCSVF…WLFWKYPQEQ (86 aa)). Positions 149–221 (AKVIQTKSTQ…QDRNYWLLQT (73 aa)) are mediates interaction with TRPV2.

Belongs to the SWEET sugar transporter family. As to quaternary structure, interacts with TRPV2; the interaction probably occurs intracellularly and depends on TRPV2 N-glycosylation. In terms of tissue distribution, ubiquitously expressed with highest expression in oviduct, epididymis and intestine.

The protein localises to the golgi apparatus membrane. The protein resides in the cell membrane. Functionally, mediates sugar transport across membranes. May stimulate V(D)J recombination by the activation of RAG1. The chain is Sugar transporter SWEET1 (SLC50A1) from Homo sapiens (Human).